The chain runs to 218 residues: Molybdenum cofactor guanylyltransferase (218 aa).

GTP-binding positions include leucine 16–glycine 18, lysine 28, asparagine 56, aspartate 74, and aspartate 109. Residue aspartate 109 coordinates Mg(2+).

The protein belongs to the MobA family. As to quaternary structure, monomer. The cofactor is Mg(2+).

The protein resides in the cytoplasm. It carries out the reaction Mo-molybdopterin + GTP + H(+) = Mo-molybdopterin guanine dinucleotide + diphosphate. In terms of biological role, transfers a GMP moiety from GTP to Mo-molybdopterin (Mo-MPT) cofactor (Moco or molybdenum cofactor) to form Mo-molybdopterin guanine dinucleotide (Mo-MGD) cofactor. This Rhizobium meliloti (strain 1021) (Ensifer meliloti) protein is Molybdenum cofactor guanylyltransferase.